The chain runs to 80 residues: Small ribosomal subunit protein bS16 (80 aa).

It belongs to the bacterial ribosomal protein bS16 family.

The sequence is that of Small ribosomal subunit protein bS16 from Laribacter hongkongensis (strain HLHK9).